Reading from the N-terminus, the 330-residue chain is Aspartate--ammonia ligase (330 aa).

The protein belongs to the class-II aminoacyl-tRNA synthetase family. AsnA subfamily.

The protein localises to the cytoplasm. It carries out the reaction L-aspartate + NH4(+) + ATP = L-asparagine + AMP + diphosphate + H(+). It functions in the pathway amino-acid biosynthesis; L-asparagine biosynthesis; L-asparagine from L-aspartate (ammonia route): step 1/1. This Enterobacter sp. (strain 638) protein is Aspartate--ammonia ligase.